The sequence spans 260 residues: WUSCHEL-related homeobox 2 (260 aa).

A DNA-binding region (homeobox; WUS-type) is located at residues 10 to 74 (ASSSRWNPTK…NHKARQRQKQ (65 aa)).

It belongs to the WUS homeobox family.

The protein resides in the nucleus. Functionally, probable transcription factor involved in embryonic patterning. Required for apical embryo development after fertilization. Its specific localization to the apical daughter cell of the zygote, while WOX8 is confined to the basal cell, suggests that the asymmetric division of the plant zygote separates determinants of apical and basal cell fates. The polypeptide is WUSCHEL-related homeobox 2 (WOX2) (Arabidopsis thaliana (Mouse-ear cress)).